Consider the following 329-residue polypeptide: Ribosomal RNA small subunit methyltransferase H (329 aa).

S-adenosyl-L-methionine is bound by residues glycine 47–histidine 49, aspartate 67, phenylalanine 93, aspartate 115, and glutamine 122.

The protein belongs to the methyltransferase superfamily. RsmH family.

It localises to the cytoplasm. The catalysed reaction is cytidine(1402) in 16S rRNA + S-adenosyl-L-methionine = N(4)-methylcytidine(1402) in 16S rRNA + S-adenosyl-L-homocysteine + H(+). Functionally, specifically methylates the N4 position of cytidine in position 1402 (C1402) of 16S rRNA. The polypeptide is Ribosomal RNA small subunit methyltransferase H (Blochmanniella pennsylvanica (strain BPEN)).